The primary structure comprises 197 residues: uncharacterized protein (197 aa).

The first 30 residues, 1 to 30, serve as a signal peptide directing secretion; sequence MSTYIIINIALLIAIVALIFFLSKKTKSEA.

This is an uncharacterized protein from Acanthamoeba polyphaga (Amoeba).